The following is a 122-amino-acid chain: Large ribosomal subunit protein uL18 (122 aa).

The protein belongs to the universal ribosomal protein uL18 family. In terms of assembly, part of the 50S ribosomal subunit; part of the 5S rRNA/L5/L18/L25 subcomplex. Contacts the 5S and 23S rRNAs.

Functionally, this is one of the proteins that bind and probably mediate the attachment of the 5S RNA into the large ribosomal subunit, where it forms part of the central protuberance. The sequence is that of Large ribosomal subunit protein uL18 from Fervidobacterium nodosum (strain ATCC 35602 / DSM 5306 / Rt17-B1).